A 563-amino-acid chain; its full sequence is Coiled-coil domain-containing protein 63 (563 aa).

The segment at 1–29 is disordered; it reads MSVLKKNRRKDSDTPQEPSEKAKEQQAEA. The segment covering 10 to 29 has biased composition (basic and acidic residues); sequence KDSDTPQEPSEKAKEQQAEA. Coiled-coil stretches lie at residues 18-201, 233-291, and 341-422; these read PSEK…QLQH, AMKD…AKKH, and TELN…KKIN.

Its function is as follows. Plays a role in spermiogenesis. Involved in the elongation of flagella and the formation of sperm heads. In Homo sapiens (Human), this protein is Coiled-coil domain-containing protein 63.